The primary structure comprises 72 residues: Gas vesicle protein A (72 aa).

The protein belongs to the gas vesicle GvpA family. As to quaternary structure, the gas vesicle shell is 2 nm thick and consists of a single layer of this protein. It forms helical ribs nearly perpendicular to the long axis of the vesicle.

It is found in the gas vesicle shell. Its function is as follows. Gas vesicles are hollow, gas filled proteinaceous nanostructures found in some microorganisms. During planktonic growth they allow positioning of the organism at a favorable depth for light or nutrient acquisition. GvpA forms the protein shell. In Planktothrix agardhii (Oscillatoria agardhii), this protein is Gas vesicle protein A.